The sequence spans 118 residues: Large ribosomal subunit protein bL20 (118 aa).

Belongs to the bacterial ribosomal protein bL20 family.

In terms of biological role, binds directly to 23S ribosomal RNA and is necessary for the in vitro assembly process of the 50S ribosomal subunit. It is not involved in the protein synthesizing functions of that subunit. The sequence is that of Large ribosomal subunit protein bL20 from Francisella tularensis subsp. holarctica (strain FTNF002-00 / FTA).